We begin with the raw amino-acid sequence, 363 residues long: G kinase-anchoring protein 1 (363 aa).

The interval 1-93 (MASAVLSSVP…SHAICNAQHE (93 aa)) is interaction with IRS1. Disordered stretches follow at residues 20–111 (QVDS…NWQE) and 145–171 (EYEN…HQGK). A phosphoserine mark is found at Ser23, Ser25, and Ser27. Positions 39–48 (TGKSQTNKST) are enriched in polar residues. Residues 43-75 (QTNKSTTNEKKREKRRKKKEQQQSEANELRNLA) adopt a coiled-coil conformation. Over residues 102–111 (KDSREENWQE) the composition is skewed to basic and acidic residues. Ser104 is modified (phosphoserine; by PKG). Coiled-coil stretches lie at residues 126 to 158 (ADLE…QSKV) and 240 to 350 (EHNQ…YQGG).

It belongs to the GKAP1 family. In terms of assembly, interacts with PRKG1 and IRS1.

It localises to the golgi apparatus. Its function is as follows. Regulates insulin-dependent IRS1 tyrosine phosphorylation in adipocytes by modulating the availability of IRS1 to IR tyrosine kinase. Its association with IRS1 is required for insulin-induced translocation of SLC2A4 to the cell membrane. Involved in TNF-induced impairment of insulin-dependent IRS1 tyrosine phosphorylation. In Bos taurus (Bovine), this protein is G kinase-anchoring protein 1 (GKAP1).